The sequence spans 500 residues: Cytochrome P450 726A27 (500 aa).

A helical; Signal-anchor for type II membrane protein transmembrane segment spans residues 7–27 (IPSYPIIFSFFIFIFMLIKIW). Cys440 lines the heme pocket.

The protein belongs to the cytochrome P450 family. Heme is required as a cofactor. In terms of tissue distribution, expressed in mature seeds.

Its subcellular location is the membrane. It catalyses the reaction (-)-casbene + reduced [NADPH--hemoprotein reductase] + O2 = 4-hydroxycasbene + oxidized [NADPH--hemoprotein reductase] + H2O + H(+). The catalysed reaction is 8-hydroxycasbene + reduced [NADPH--hemoprotein reductase] + O2 = 4,8-dihydroxycasbene + oxidized [NADPH--hemoprotein reductase] + H2O + H(+). It carries out the reaction 4,8-dihydroxycasbene + reduced [NADPH--hemoprotein reductase] + O2 = 4,5,8-trihydroxycasbene + oxidized [NADPH--hemoprotein reductase] + H2O + H(+). It participates in secondary metabolite biosynthesis; terpenoid biosynthesis. In terms of biological role, involved in the biosynthesis of macrocyclic lathyrane type diterpenoids (also called Euphorbia factors) natural products, including the cyclization route from casbene to jolkinol C, a precursor for ingenol mebutate that is used to treat actinic keratosis, a precancerous skin condition. Catalyzes the hydroxylation of (-)-casbene and 8-hydroxycasbene to produce 4-hydroxycasbene and 4,8-dihydroxycasbene, respectively. In Euphorbia lathyris (Caper spurge), this protein is Cytochrome P450 726A27.